A 437-amino-acid chain; its full sequence is RNA-binding motif, single-stranded-interacting protein 3 (437 aa).

The segment at 28 to 57 (YAPAPHPMAPPSPSTNSSSNNSSNNSSGEQ) is disordered. The segment covering 31–40 (APHPMAPPSP) has biased composition (pro residues). A compositionally biased stretch (low complexity) spans 41–54 (STNSSSNNSSNNSS). RRM domains are found at residues 61–134 (TNLY…MAKQ) and 140–225 (TNLY…FADG). Residues 399 to 422 (TSPQTVAPSSQDTSGQQQQIAVDT) are compositionally biased toward polar residues. Residues 399-437 (TSPQTVAPSSQDTSGQQQQIAVDTSNEHAPAYSYQQSKP) form a disordered region.

Expressed in fetal brain, fetal lung, fetal liver, heart, brain, placenta, lung, liver, muscle, kidney and pancreas.

The protein resides in the cytoplasm. Functionally, binds poly(A) and poly(U) oligoribonucleotides. The sequence is that of RNA-binding motif, single-stranded-interacting protein 3 (RBMS3) from Homo sapiens (Human).